The chain runs to 148 residues: MGLEKSLILFPLLVLVVGWVQPSLGKETSAMKFERHDVDSDSSSSSPTYCNQMMKRREMTKGSCKPVNTFVHESLQDIHAVCSQKNVKCKNGQTNCYKSRSALRITDCRLTGSSKYPNCEYKTSQQQKHIIVACEGNPSVPVHFDASA.

Positions 1–25 are cleaved as a signal peptide; that stretch reads MGLEKSLILFPLLVLVVGWVQPSLG. Residues lysine 32, arginine 35, 65–69, lysine 90, and arginine 109 contribute to the substrate site; that span reads KPVNT. 4 disulfide bridges follow: cysteine 50-cysteine 108, cysteine 64-cysteine 119, cysteine 82-cysteine 134, and cysteine 89-cysteine 96. Histidine 143 (proton donor) is an active-site residue.

The protein belongs to the pancreatic ribonuclease family. In terms of assembly, monomer. Interacts with and forms tight 1:1 complexes with RNH1. Dimerization of two such complexes may occur. Interaction with RNH1 inhibits this protein. Pancreas.

The protein localises to the secreted. The enzyme catalyses an [RNA] containing cytidine + H2O = an [RNA]-3'-cytidine-3'-phosphate + a 5'-hydroxy-ribonucleotide-3'-[RNA].. The catalysed reaction is an [RNA] containing uridine + H2O = an [RNA]-3'-uridine-3'-phosphate + a 5'-hydroxy-ribonucleotide-3'-[RNA].. In terms of biological role, endonuclease that catalyzes the cleavage of RNA on the 3' side of pyrimidine nucleotides. Acts on single-stranded and double-stranded RNA. In Peromyscus leucopus (White-footed mouse), this protein is Ribonuclease pancreatic (RNASE1).